Consider the following 432-residue polypeptide: Interleukin-11 receptor subunit alpha-1 (432 aa).

Residues 1–23 (MSSSCSGLTRVLVAVATALVSSS) form the signal peptide. Over 24–372 (SPCPQAWGPP…DPLEQVAVLA (349 aa)) the chain is Extracellular. One can recognise an Ig-like C2-type domain in the interval 27–110 (PQAWGPPGVQ…SGGMVTLKLG (84 aa)). Intrachain disulfides connect C48–C94, C120–C130, and C170–C180. Fibronectin type-III domains are found at residues 112–219 (PPAR…LRPD) and 220–317 (PPQG…TPST). The N-linked (GlcNAc...) asparagine glycan is linked to N127. The tract at residues 151 to 170 (KTLPGAESQRESPSTGPWPC) is disordered. N194 is a glycosylation site (N-linked (GlcNAc...) asparagine). Positions 304–308 (WSAWS) match the WSXWS motif motif. Disordered regions lie at residues 309–332 (PEAW…QGHG) and 342–361 (EDSP…PLDH). The chain crosses the membrane as a helical span at residues 373 to 393 (SLGIFSCLGLAVGALALGLWL). Residues 394-432 (RLRRSGKDGPQKPGLLAPMIPVEKLPGIPNLQRTPENFS) lie on the Cytoplasmic side of the membrane.

It belongs to the type I cytokine receptor family. Type 3 subfamily. As to quaternary structure, on IL11 binding, forms a multimer complex with IL6ST/gp130. In terms of processing, a short soluble form is also released from the membrane by proteolysis. The sIL11RA is formed either by limited proteolysis of membrane-bound receptors, a process referred to as ectodomain shedding, or directly secreted from the cells after alternative mRNA splicing. mIL11RA is cleaved by the proteases ADAM10, ELANE and PRTN3. In terms of tissue distribution, widely expressed in all adult tissues and in embryos. Highest levels in kidney, skeletal muscle and embryo.

The protein resides in the membrane. It localises to the secreted. Its function is as follows. Receptor for interleukin-11. The receptor systems for IL6, LIF, OSM, CNTF, IL11 and CT1 can utilize IL6ST for initiating signal transmission. The IL11/IL11RA/IL6ST complex may be involved in the control of proliferation and/or differentiation of skeletogenic progenitor or other mesenchymal cells. Essential for the normal development of craniofacial bones and teeth. In terms of biological role, soluble form of IL11 receptor (sIL11RA) that acts as an agonist of IL11 activity. The IL11:sIL11RA complex binds to IL6ST/gp130 on cell surfaces and induces signaling also on cells that do not express membrane-bound IL11RA in a process called IL11 trans-signaling. The chain is Interleukin-11 receptor subunit alpha-1 from Mus musculus (Mouse).